We begin with the raw amino-acid sequence, 93 residues long: Small ribosomal subunit protein bS20c (93 aa).

Belongs to the bacterial ribosomal protein bS20 family.

The protein localises to the plastid. The protein resides in the chloroplast. In terms of biological role, binds directly to 16S ribosomal RNA. The sequence is that of Small ribosomal subunit protein bS20c from Phaeodactylum tricornutum (strain CCAP 1055/1).